Here is a 686-residue protein sequence, read N- to C-terminus: L-type lectin-domain containing receptor kinase VII.1 (686 aa).

A signal peptide spans 1–20; sequence MKALLFLLTLFLILPNPISA. The tract at residues 21-256 is legume-lectin like; sequence IDFIFNGFND…SHKILAWSFS (236 aa). Residues 21 to 286 are Extracellular-facing; it reads IDFIFNGFND…PKDSIVKAKW (266 aa). Residues asparagine 29, asparagine 34, asparagine 52, asparagine 64, asparagine 111, asparagine 123, asparagine 168, asparagine 203, asparagine 224, and asparagine 259 are each glycosylated (N-linked (GlcNAc...) asparagine). Residues 287-307 traverse the membrane as a helical segment; sequence FVFVLVLICFLVVALVGLVLF. Topologically, residues 308 to 686 are cytoplasmic; it reads AVVRKRLERA…SWNSSILEGR (379 aa). Residues 347-628 form the Protein kinase domain; that stretch reads FDEKNVIGIG…VFEGDKAEIF (282 aa). Residues 353–361 and lysine 376 each bind ATP; that span reads IGIGGNGKV. The Proton acceptor role is filled by aspartate 475.

The protein in the C-terminal section; belongs to the protein kinase superfamily. Ser/Thr protein kinase family. In the N-terminal section; belongs to the leguminous lectin family.

Its subcellular location is the cell membrane. It catalyses the reaction L-seryl-[protein] + ATP = O-phospho-L-seryl-[protein] + ADP + H(+). It carries out the reaction L-threonyl-[protein] + ATP = O-phospho-L-threonyl-[protein] + ADP + H(+). This Arabidopsis thaliana (Mouse-ear cress) protein is L-type lectin-domain containing receptor kinase VII.1 (LECRK71).